The following is a 396-amino-acid chain: NADH-quinone oxidoreductase subunit D 1 (396 aa).

Belongs to the complex I 49 kDa subunit family. As to quaternary structure, NDH-1 is composed of 14 different subunits. Subunits NuoB, C, D, E, F, and G constitute the peripheral sector of the complex.

Its subcellular location is the cell inner membrane. It catalyses the reaction a quinone + NADH + 5 H(+)(in) = a quinol + NAD(+) + 4 H(+)(out). In terms of biological role, NDH-1 shuttles electrons from NADH, via FMN and iron-sulfur (Fe-S) centers, to quinones in the respiratory chain. The immediate electron acceptor for the enzyme in this species is believed to be ubiquinone. Couples the redox reaction to proton translocation (for every two electrons transferred, four hydrogen ions are translocated across the cytoplasmic membrane), and thus conserves the redox energy in a proton gradient. In Rhizobium etli (strain CIAT 652), this protein is NADH-quinone oxidoreductase subunit D 1.